Reading from the N-terminus, the 152-residue chain is Transcriptional repressor NrdR (152 aa).

A zinc finger lies at 3-34; it reads CPFCHNEQSRVIDSRVIDSGTSIRRRRECAAC. The region spanning 46–136 is the ATP-cone domain; that stretch reads LSVVKRNGLA…VYKSFESADD (91 aa).

The protein belongs to the NrdR family. The cofactor is Zn(2+).

Functionally, negatively regulates transcription of bacterial ribonucleotide reductase nrd genes and operons by binding to NrdR-boxes. This Corynebacterium aurimucosum (strain ATCC 700975 / DSM 44827 / CIP 107346 / CN-1) (Corynebacterium nigricans) protein is Transcriptional repressor NrdR.